Consider the following 401-residue polypeptide: MSKEKIALAYSGGLDTSVMIKWLKDKYDAEIVAVTGNLGQEKEVENLEEKAIATGASSFAFLDLRKEFVESCIWPALKAGALYEDVYPLATALGRPLIAKALVDIALENNCTMLAHGCTGKGNDQVRFEVTFASLAPQLAVLAPLREWEFTSREAEIAYAMEHNIPVSATKKSPYSIDENIWGISIECGVLEDPMTPAPEDAYQITTSPEKAPDKAAVIDIEFEQGVPVALDGKAMEGLDLIVELNKVGAAHGVGRLDMVENRVVGIKSREIYEAPAATILHFAHRELERLTLEKSVFQYKKNVSQDYANLIYNGTWFSPMREALDGFIEATQKTVTGLVRVKLFKGSVTLLGRTSPWSLYNEDLATYTEADTFNHKAAEGFIHLYGLGLKTWSEVKANNS.

9 to 17 (AYSGGLDTS) contacts ATP. Tyr87 provides a ligand contact to L-citrulline. Gly117 provides a ligand contact to ATP. L-aspartate is bound by residues Thr119, Asn123, and Asp124. Position 123 (Asn123) interacts with L-citrulline. 5 residues coordinate L-citrulline: Arg127, Ser176, Ser185, Glu261, and Tyr273.

Belongs to the argininosuccinate synthase family. Type 1 subfamily. As to quaternary structure, homotetramer.

The protein resides in the cytoplasm. The catalysed reaction is L-citrulline + L-aspartate + ATP = 2-(N(omega)-L-arginino)succinate + AMP + diphosphate + H(+). It participates in amino-acid biosynthesis; L-arginine biosynthesis; L-arginine from L-ornithine and carbamoyl phosphate: step 2/3. This Prosthecochloris aestuarii (strain DSM 271 / SK 413) protein is Argininosuccinate synthase.